The primary structure comprises 223 residues: Imidazoleglycerol-phosphate dehydratase (223 aa).

This sequence belongs to the imidazoleglycerol-phosphate dehydratase family.

The enzyme catalyses D-erythro-1-(imidazol-4-yl)glycerol 3-phosphate = 3-(imidazol-4-yl)-2-oxopropyl phosphate + H2O. It participates in amino-acid biosynthesis; L-histidine biosynthesis; L-histidine from 5-phospho-alpha-D-ribose 1-diphosphate: step 6/9. This Candida albicans (Yeast) protein is Imidazoleglycerol-phosphate dehydratase (HIS3).